We begin with the raw amino-acid sequence, 814 residues long: Threonine--tRNA ligase 2, cytoplasmic (814 aa).

Residues 2-72 adopt a coiled-coil conformation; sequence AAHIAQRLTV…SLREEQERAR (71 aa). The segment at 62-142 is disordered; it reads RSLREEQERA…GHKQEGPCAP (81 aa). Basic and acidic residues-rich tracts occupy residues 63–72, 88–102, and 119–137; these read SLREEQERAR, EEPK…EKGQ, and GNKK…HKQE. A TGS domain is found at 172 to 234; the sequence is KPIKITLADG…EQDSNVELLK (63 aa). The Nuclear localization signal motif lies at 798 to 804; sequence KLKTLKK.

Belongs to the class-II aminoacyl-tRNA synthetase family.

The protein localises to the cytoplasm. It is found in the nucleus. The catalysed reaction is tRNA(Thr) + L-threonine + ATP = L-threonyl-tRNA(Thr) + AMP + diphosphate + H(+). Catalyzes the attachment of threonine to tRNA(Thr) in a two-step reaction: threonine is first activated by ATP to form Thr-AMP and then transferred to the acceptor end of tRNA(Thr). Also edits incorrectly charged tRNA(Thr) via its editing domain, at the post-transfer stage. The chain is Threonine--tRNA ligase 2, cytoplasmic (tars3) from Xenopus tropicalis (Western clawed frog).